Consider the following 354-residue polypeptide: 3'-5' exonuclease (354 aa).

The disordered stretch occupies residues 1-120; the sequence is MERFLTKMPI…PSPEKEKPEK (120 aa). Composition is skewed to basic and acidic residues over residues 13–30 and 37–50; these read KANEVPKKEAVAKKETPK and KKDTPKELKDKENA. Basic residues predominate over residues 59 to 70; that stretch reads TKGRPGRPAAKR. Over residues 71–91 the composition is skewed to basic and acidic residues; the sequence is KNLDTPDVKDEKIAMEEENPP. 3 positions are modified to phosphoserine: Ser104, Ser110, and Ser112. A 3'-5' exonuclease domain is found at 149-314; that stretch reads WVEKQKDDVV…GQVIYRELER (166 aa). Residues Asp163, Glu165, and Asp301 each coordinate Mg(2+).

This sequence belongs to the WRNexo family.

The protein resides in the nucleus. Functionally, has exonuclease activity on both single-stranded and duplex templates bearing overhangs, but not blunt ended duplex DNA, and cleaves in a 3'-5' direction. Essential for the formation of DNA replication focal centers. Has an important role in maintaining genome stability. This Drosophila simulans (Fruit fly) protein is 3'-5' exonuclease.